A 226-amino-acid chain; its full sequence is Lysosomal-associated transmembrane protein 4B (226 aa).

4 helical membrane passes run 26–46 (ILLGVWYLIINAVVLLILLSA), 72–92 (MCIAIAISLLMILICAMATYG), 100–120 (WIIPFFCYQIFDFALNTLVAI), and 153–173 (CLVLIILLFISIILTFKGYLI). The required for NEDD4 interaction stretch occupies residues 205–221 (PPYDDATVNGAAKEPPP).

This sequence belongs to the LAPTM4/LAPTM5 transporter family. As to quaternary structure, homooligomer; upon reaching the lysosomes. Interacts with MCOLN1. Interacts with NEDD4; may play a role in the lysosomal sorting of LAPTM4B; enhances HGS association with NEDD4; mediates inhibition of EGFR degradation. Interacts with PIP5K1C; promotes SNX5 association with LAPTM4B; kinase activity of PIP5K1C is required; interaction is regulated by phosphatidylinositol 4,5-bisphosphate generated by PIP5K1C. Interacts with HGS; promotes HGS ubiquitination. Interacts with SNX5. Interacts with SLC3A2 and SLC7A5; recruits SLC3A2 and SLC7A5 to lysosomes to promote leucine uptake into these organelles and is required for mTORC1 activation. Interacts with LRRC32; decreases TGFB1 production in regulatory T cells. Interacts with BECN1; competes with EGFR for LAPTM4B binding; regulates EGFR activity. Interacts with EGFR; positively correlates with EGFR activation. Undergoes proteolytic cleavage following delivery to the lysosomes. In terms of processing, ubiquitinated by NEDD4.

It is found in the endomembrane system. It localises to the late endosome membrane. The protein resides in the cell membrane. The protein localises to the cell projection. Its subcellular location is the lysosome membrane. It is found in the endosome membrane. It localises to the endosome. The protein resides in the multivesicular body membrane. The protein localises to the multivesicular body lumen. In terms of biological role, required for optimal lysosomal function. Blocks EGF-stimulated EGFR intraluminal sorting and degradation. Conversely by binding with the phosphatidylinositol 4,5-bisphosphate, regulates its PIP5K1C interaction, inhibits HGS ubiquitination and relieves LAPTM4B inhibition of EGFR degradation. Recruits SLC3A2 and SLC7A5 (the Leu transporter) to the lysosome, promoting entry of leucine and other essential amino acid (EAA) into the lysosome, stimulating activation of proton-transporting vacuolar (V)-ATPase protein pump (V-ATPase) and hence mTORC1 activation. Plays a role as negative regulator of TGFB1 production in regulatory T cells. Binds ceramide and facilitates its exit from late endosome in order to control cell death pathways. This Macaca fascicularis (Crab-eating macaque) protein is Lysosomal-associated transmembrane protein 4B.